The sequence spans 704 residues: Eukaryotic translation initiation factor 2-alpha kinase 1 (704 aa).

The 444-residue stretch at 224-667 folds into the Protein kinase domain; sequence FEELELLGKG…LTSNLFHDLV (444 aa). ATP contacts are provided by residues 230–238 and K253; that span reads LGKGGYGSV. Residue D491 is the Proton acceptor of the active site.

The protein belongs to the protein kinase superfamily. Ser/Thr protein kinase family. GCN2 subfamily. Post-translationally, autophosphorylated.

The catalysed reaction is L-seryl-[protein] + ATP = O-phospho-L-seryl-[protein] + ADP + H(+). The enzyme catalyses L-threonyl-[protein] + ATP = O-phospho-L-threonyl-[protein] + ADP + H(+). Functionally, mediates down-regulation of protein synthesis in response to stress conditions by the phosphorylation of the alpha subunit of eIF-2 (tif211) on 'Ser-52'. Protein synthesis is inhibited at the level of initiation. Activity is inhibited in the presence of heme. The polypeptide is Eukaryotic translation initiation factor 2-alpha kinase 1 (hri1) (Schizosaccharomyces pombe (strain 972 / ATCC 24843) (Fission yeast)).